The sequence spans 258 residues: UDP-2,3-diacylglucosamine hydrolase (258 aa).

Mn(2+) is bound by residues aspartate 15, histidine 17, aspartate 48, asparagine 88, and histidine 123. Substrate is bound at residue 88–89 (NR). Substrate is bound by residues aspartate 131, serine 169, asparagine 173, lysine 176, and histidine 204. Mn(2+) is bound by residues histidine 204 and histidine 206.

This sequence belongs to the LpxH family. It depends on Mn(2+) as a cofactor.

The protein localises to the cell inner membrane. The catalysed reaction is UDP-2-N,3-O-bis[(3R)-3-hydroxytetradecanoyl]-alpha-D-glucosamine + H2O = 2-N,3-O-bis[(3R)-3-hydroxytetradecanoyl]-alpha-D-glucosaminyl 1-phosphate + UMP + 2 H(+). The protein operates within glycolipid biosynthesis; lipid IV(A) biosynthesis; lipid IV(A) from (3R)-3-hydroxytetradecanoyl-[acyl-carrier-protein] and UDP-N-acetyl-alpha-D-glucosamine: step 4/6. Functionally, hydrolyzes the pyrophosphate bond of UDP-2,3-diacylglucosamine to yield 2,3-diacylglucosamine 1-phosphate (lipid X) and UMP by catalyzing the attack of water at the alpha-P atom. Involved in the biosynthesis of lipid A, a phosphorylated glycolipid that anchors the lipopolysaccharide to the outer membrane of the cell. The protein is UDP-2,3-diacylglucosamine hydrolase of Bordetella bronchiseptica (strain ATCC BAA-588 / NCTC 13252 / RB50) (Alcaligenes bronchisepticus).